The chain runs to 179 residues: Large ribosomal subunit protein uL6 (179 aa).

Belongs to the universal ribosomal protein uL6 family. As to quaternary structure, part of the 50S ribosomal subunit.

Its function is as follows. This protein binds to the 23S rRNA, and is important in its secondary structure. It is located near the subunit interface in the base of the L7/L12 stalk, and near the tRNA binding site of the peptidyltransferase center. This chain is Large ribosomal subunit protein uL6, found in Clostridium novyi (strain NT).